The primary structure comprises 242 residues: Succinyl-CoA:3-ketoacid coenzyme A transferase subunit A (242 aa).

Position 33-39 (33-39 (GGFGLCG)) interacts with CoA.

It belongs to the 3-oxoacid CoA-transferase subunit A family. As to quaternary structure, heterodimer of a subunit A and a subunit B.

It catalyses the reaction a 3-oxo acid + succinyl-CoA = a 3-oxoacyl-CoA + succinate. The protein operates within bacterial outer membrane biogenesis; lipopolysaccharide biosynthesis. The protein is Succinyl-CoA:3-ketoacid coenzyme A transferase subunit A (lpsI) of Xanthomonas campestris pv. campestris (strain B100).